The sequence spans 500 residues: Nucleolar and spindle-associated protein 1 (500 aa).

Disordered regions lie at residues 48 to 204 (KNET…NFKK), 241 to 299 (TKKS…ASKS), 319 to 353 (VRFS…PESE), and 365 to 500 (ELLP…VPVK). The segment covering 82 to 92 (THRRGRGRKPI) has biased composition (basic residues). Polar residues predominate over residues 113–127 (NMASSIDRTQQQNCT). Over residues 264–274 (SRLSLLSPLPR) the composition is skewed to low complexity. Residues 276–298 (TGASPSRTPMSQRRSCRSSTASK) show a composition bias toward polar residues. The span at 323-332 (EATKDNEHKR) shows a compositional bias: basic and acidic residues. Polar residues predominate over residues 380–392 (ITLNTTTQPSPAT). The span at 442–451 (PWGESKENKP) shows a compositional bias: basic and acidic residues. Positions 452-469 (DPNSNVSVLKNNYKQPHL) are enriched in polar residues.

Belongs to the NUSAP family. In terms of assembly, interacts with DNA, microtubules, ipo7, kpna2 and kpnb1. Microtubule stabilization is inhibited by ipo7 and kpna2, while microtubule bundling is inhibited by kpnb1. Active GTP-bound ran causes dissociation of ipo7 and kpnb1.

It is found in the cytoplasm. The protein resides in the nucleus. The protein localises to the cytoskeleton. Its subcellular location is the spindle. Its function is as follows. Microtubule-associated protein with the capacity to bundle and stabilize microtubules. May associate with chromosomes and promote the organization of meiotic or mitotic spindle microtubules around them. The polypeptide is Nucleolar and spindle-associated protein 1 (nusap1) (Xenopus tropicalis (Western clawed frog)).